A 218-amino-acid chain; its full sequence is 3,4-dihydroxy-2-butanone 4-phosphate synthase (218 aa).

Residues 37–38, Asp-42, 150–154, and Glu-174 contribute to the D-ribulose 5-phosphate site; these read RE and RGGHT. Position 38 (Glu-38) interacts with Mg(2+). His-153 provides a ligand contact to Mg(2+).

Belongs to the DHBP synthase family. In terms of assembly, homodimer. The cofactor is Mg(2+). Requires Mn(2+) as cofactor.

It catalyses the reaction D-ribulose 5-phosphate = (2S)-2-hydroxy-3-oxobutyl phosphate + formate + H(+). The protein operates within cofactor biosynthesis; riboflavin biosynthesis; 2-hydroxy-3-oxobutyl phosphate from D-ribulose 5-phosphate: step 1/1. In terms of biological role, catalyzes the conversion of D-ribulose 5-phosphate to formate and 3,4-dihydroxy-2-butanone 4-phosphate. The polypeptide is 3,4-dihydroxy-2-butanone 4-phosphate synthase (Erwinia tasmaniensis (strain DSM 17950 / CFBP 7177 / CIP 109463 / NCPPB 4357 / Et1/99)).